Here is a 426-residue protein sequence, read N- to C-terminus: Glutamate-1-semialdehyde 2,1-aminomutase (426 aa).

Position 265 is an N6-(pyridoxal phosphate)lysine (Lys-265).

It belongs to the class-III pyridoxal-phosphate-dependent aminotransferase family. HemL subfamily. As to quaternary structure, homodimer. The cofactor is pyridoxal 5'-phosphate.

The protein resides in the cytoplasm. The enzyme catalyses (S)-4-amino-5-oxopentanoate = 5-aminolevulinate. It functions in the pathway porphyrin-containing compound metabolism; protoporphyrin-IX biosynthesis; 5-aminolevulinate from L-glutamyl-tRNA(Glu): step 2/2. This chain is Glutamate-1-semialdehyde 2,1-aminomutase, found in Yersinia pestis bv. Antiqua (strain Antiqua).